We begin with the raw amino-acid sequence, 530 residues long: Alpha-(1,3)-fucosyltransferase 4 (530 aa).

Disordered stretches follow at residues 1-48 (MRRL…RAVP) and 66-112 (HLGG…STPA). At 1–147 (MRRLWGAARK…GGRRGWRRGR (147 aa)) the chain is on the cytoplasmic side. The segment covering 88 to 106 (ASGERQRRLEPQLQHESRC) has biased composition (basic and acidic residues). Residues 148–172 (GLPWTVCVLAAAGLTCTALITYACW) traverse the membrane as a helical; Signal-anchor for type II membrane protein segment. Topologically, residues 173-530 (GQLPPLPWAS…IRNLASWFER (358 aa)) are lumenal. Asn216 and Asn315 each carry an N-linked (GlcNAc...) asparagine glycan.

It belongs to the glycosyltransferase 10 family. Expressed at low levels in bone marrow-derived mesenchymal stem cells. In terms of tissue distribution, expressed in cord blood immature promyelocytes and in peripheral blood myeloid and lymphoid cell populations.

The protein resides in the golgi apparatus. It localises to the golgi stack membrane. It carries out the reaction a beta-D-galactosyl-(1-&gt;4)-N-acetyl-beta-D-glucosaminyl derivative + GDP-beta-L-fucose = a beta-D-galactosyl-(1-&gt;4)-[alpha-L-fucosyl-(1-&gt;3)]-N-acetyl-beta-D-glucosaminyl derivative + GDP + H(+). The enzyme catalyses an N-acetyl-alpha-neuraminyl-(2-&gt;3)-beta-D-galactosyl-(1-&gt;4)-N-acetyl-beta-D-glucosaminyl derivative + GDP-beta-L-fucose = an alpha-Neu5Ac-(2-&gt;3)-beta-D-Gal-(1-&gt;4)-[alpha-L-Fuc-(1-&gt;3)]-beta-D-GlcNAc derivative + GDP + H(+). The catalysed reaction is an alpha-Neu5Ac-(2-&gt;3)-beta-D-Gal-(1-&gt;4)-beta-D-GlcNAc-(1-&gt;3)-beta-D-Gal-(1-&gt;4)-beta-D-GlcNAc derivative + GDP-beta-L-fucose = an alpha-Neu5Ac-(2-&gt;3)-beta-D-Gal-(1-&gt;4)-beta-D-GlcNAc-(1-&gt;3)-beta-D-Gal-(1-&gt;4)-[alpha-L-Fuc-(1-&gt;3)]-beta-D-GlcNAc derivative + GDP + H(+). It catalyses the reaction an alpha-Neu5Ac-(2-&gt;3)-beta-D-Gal-(1-&gt;4)-beta-D-GlcNAc6S derivative + GDP-beta-L-fucose = an alpha-Neu5Ac-(2-&gt;3)-beta-D-Gal-(1-&gt;4)-[alpha-L-Fuc-(1-&gt;3)]-beta-D-GlcNAc6S derivative + GDP + H(+). It participates in protein modification; protein glycosylation. In terms of biological role, catalyzes alpha(1-&gt;3) linkage of fucosyl moiety transferred from GDP-beta-L-fucose to N-acetyl glucosamine (GlcNAc) within type 2 lactosamine (LacNAc, Gal-beta(1-&gt;4)GlcNAc) glycan attached to N- or O-linked glycoproteins. Robustly fucosylates nonsialylated distal LacNAc unit of the polylactosamine chain to form Lewis X antigen (CD15), a glycan determinant known to mediate important cellular functions in development and immunity. Fucosylates with lower efficiency sialylated LacNAc acceptors to form sialyl Lewis X and 6-sulfo sialyl Lewis X determinants that serve as recognition epitopes for C-type lectins. Together with FUT7 contributes to SELE, SELL and SELP selectin ligand biosynthesis and selectin-dependent lymphocyte homing, leukocyte migration and blood leukocyte homeostasis. In a cell type specific manner, may also fucosylate the internal LacNAc unit of the polylactosamine chain to form VIM-2 antigen that serves as recognition epitope for SELE. Functionally, does not generate Lewis X antigens. The polypeptide is Alpha-(1,3)-fucosyltransferase 4 (Homo sapiens (Human)).